The chain runs to 529 residues: Bifunctional purine biosynthesis protein PurH (529 aa).

The 148-residue stretch at 1 to 148 (MQQRRPVRRA…KNHKDVAIVV (148 aa)) folds into the MGS-like domain.

Belongs to the PurH family.

It carries out the reaction (6R)-10-formyltetrahydrofolate + 5-amino-1-(5-phospho-beta-D-ribosyl)imidazole-4-carboxamide = 5-formamido-1-(5-phospho-D-ribosyl)imidazole-4-carboxamide + (6S)-5,6,7,8-tetrahydrofolate. The catalysed reaction is IMP + H2O = 5-formamido-1-(5-phospho-D-ribosyl)imidazole-4-carboxamide. Its pathway is purine metabolism; IMP biosynthesis via de novo pathway; 5-formamido-1-(5-phospho-D-ribosyl)imidazole-4-carboxamide from 5-amino-1-(5-phospho-D-ribosyl)imidazole-4-carboxamide (10-formyl THF route): step 1/1. It functions in the pathway purine metabolism; IMP biosynthesis via de novo pathway; IMP from 5-formamido-1-(5-phospho-D-ribosyl)imidazole-4-carboxamide: step 1/1. The sequence is that of Bifunctional purine biosynthesis protein PurH from Salmonella paratyphi A (strain ATCC 9150 / SARB42).